The sequence spans 614 residues: Kelch-like protein 40 (614 aa).

One can recognise a BTB domain in the interval 33-100 (IDCVLKIQGK…IYTSEIEITE (68 aa)). The BACK domain occupies 135–237 (CLAIFRLGLL…PQDYIKNKVE (103 aa)). 5 Kelch repeats span residues 353–405 (QLFV…ESEN), 406–455 (SIYL…SHDN), 456–503 (LVYV…VHKG), 504–550 (KIFI…SMNG), and 552–606 (LYAI…AARL).

This sequence belongs to the KLHL40 family. As to quaternary structure, component of the BCR(KLHL40) E3 ubiquitin ligase complex.

The protein resides in the cytoplasm. The protein localises to the myofibril. It is found in the sarcomere. Its subcellular location is the a band. It localises to the i band. Substrate-specific adapter of a BCR (BTB-CUL3-RBX1) E3 ubiquitin ligase complex that acts as a key regulator of skeletal muscle development. This Xenopus laevis (African clawed frog) protein is Kelch-like protein 40 (klhl40).